A 227-amino-acid polypeptide reads, in one-letter code: uncharacterized protein (227 aa).

Residues 7–26 (IITLTILIFISGLLTAFLLL) traverse the membrane as a helical segment.

The protein resides in the membrane. This is an uncharacterized protein from Haemophilus influenzae (strain ATCC 51907 / DSM 11121 / KW20 / Rd).